The following is a 589-amino-acid chain: Cytoplasmic polyadenylation element-binding protein 2 (589 aa).

Disordered regions lie at residues 1–103 and 118–140; these read MPPP…QAAA and PLLKQSPWSNHQSSGWGTGSMSW. Low complexity predominate over residues 24–33; it reads FFPSFSPVSP. Over residues 44-53 the composition is skewed to gly residues; that stretch reads SGGGGGGFGG. Positions 60-81 are enriched in pro residues; sequence VPPPPPPAMNIPQQQPPPPAAP. Composition is skewed to low complexity over residues 82–103 and 130–140; these read QQPQSRRSPVSPQLQQQHQAAA and SSGWGTGSMSW. At Ser-89 the chain carries Phosphoserine. RRM domains are found at residues 332–423 and 440–522; these read RKVF…PWNL and KTIF…PYVL.

Belongs to the RRM CPEB family. Interacts with TENT2/GLD2.

The protein localises to the cytoplasm. Functionally, may play a role in translational regulation of stored mRNAs in transcriptionally inactive haploid spermatids. Binds to poly(U) RNA oligomers. Required for cell cycle progression, specifically for the transition from metaphase to anaphase. This Homo sapiens (Human) protein is Cytoplasmic polyadenylation element-binding protein 2 (CPEB2).